Reading from the N-terminus, the 635-residue chain is Biosynthetic arginine decarboxylase (635 aa).

Lys100 carries the N6-(pyridoxal phosphate)lysine modification. 282–292 serves as a coordination point for substrate; sequence LDIGGGLGVDY.

The protein belongs to the Orn/Lys/Arg decarboxylase class-II family. SpeA subfamily. Requires Mg(2+) as cofactor. Pyridoxal 5'-phosphate serves as cofactor.

It carries out the reaction L-arginine + H(+) = agmatine + CO2. It functions in the pathway amine and polyamine biosynthesis; agmatine biosynthesis; agmatine from L-arginine: step 1/1. Catalyzes the biosynthesis of agmatine from arginine. In Geobacter sp. (strain M21), this protein is Biosynthetic arginine decarboxylase.